A 426-amino-acid chain; its full sequence is Neuromedin-U receptor 1 (426 aa).

The Extracellular segment spans residues 1–65 (MTPLCLNCSV…QTELFMPICA (65 aa)). 3 N-linked (GlcNAc...) asparagine glycosylation sites follow: Asn7, Asn27, and Asn41. The chain crosses the membrane as a helical span at residues 66–86 (TYLLIFVVGAVGNGLTCLVIL). Residues 87-97 (RHKAMRTPTNY) lie on the Cytoplasmic side of the membrane. A helical membrane pass occupies residues 98 to 118 (YLFSLAVSDLLVLLVGLPLEL). Over 119-138 (YEMWHNYPFLLGVGGCYFRT) the chain is Extracellular. Cys134 and Cys219 form a disulfide bridge. A helical membrane pass occupies residues 139–161 (LLFEMVCLASVLNVTALSVERYV). The Cytoplasmic portion of the chain corresponds to 162–181 (AVVHPLQARSMVTRAHVRRV). Residues 182–202 (LGAVWGLAMLCSLPNTSLHGI) traverse the membrane as a helical segment. Residues 203 to 235 (RQLHVPCRGPVPDSAVCMLVRPRALYNMVVQTT) are Extracellular-facing. A helical membrane pass occupies residues 236-256 (ALLFFCLPMAIMSVLYLLIGL). The Cytoplasmic segment spans residues 257–294 (RLRRERLLLMQEAKGRGSAAARSRYTCRLQQHDRGRRQ). Residues 295–315 (VTKMLFVLVVVFGICWAPFHA) form a helical membrane-spanning segment. The Extracellular portion of the chain corresponds to 316 to 338 (DRVMWSVVSQWTDGLHLAFQHVH). A helical membrane pass occupies residues 339–359 (VISGIFFYLGSAANPVLYSLM). Topologically, residues 360 to 426 (SSRFRETFQE…PEAQQETDPS (67 aa)) are cytoplasmic.

Belongs to the G-protein coupled receptor 1 family. Expressed in greatest abundance in peripheral organs, particularly in elements of the gastrointestinal and urogenital systems with highest levels in testes. In central nervous system structures express levels are much lower than those seen in peripheral organs. Within the CNS, has been detected in highest abundance in the cerebellum, dorsal root ganglia, hippocampus, and spinal cord.

The protein localises to the cell membrane. In terms of biological role, receptor for the neuromedin-U and neuromedin-S neuropeptides. This is Neuromedin-U receptor 1 (NMUR1) from Homo sapiens (Human).